A 137-amino-acid polypeptide reads, in one-letter code: Large ribosomal subunit protein uL16c (137 aa).

Residues 1–17 (MLSPKKTRFRRQHRGRM) are compositionally biased toward basic residues. Residues 1 to 21 (MLSPKKTRFRRQHRGRMKGLS) are disordered.

Belongs to the universal ribosomal protein uL16 family. Part of the 50S ribosomal subunit.

It localises to the plastid. The chain is Large ribosomal subunit protein uL16c from Cuscuta obtusiflora (Peruvian dodder).